A 435-amino-acid chain; its full sequence is 3-phosphoshikimate 1-carboxyvinyltransferase (435 aa).

3-phosphoshikimate-binding residues include lysine 15, serine 16, and arginine 20. Residue lysine 15 participates in phosphoenolpyruvate binding. Glycine 96 and arginine 124 together coordinate phosphoenolpyruvate. 3-phosphoshikimate is bound by residues serine 169, glutamine 171, serine 195, aspartate 319, and lysine 346. Glutamine 171 is a phosphoenolpyruvate binding site. Aspartate 319 (proton acceptor) is an active-site residue. Positions 350 and 395 each coordinate phosphoenolpyruvate.

Belongs to the EPSP synthase family. Monomer.

Its subcellular location is the cytoplasm. The catalysed reaction is 3-phosphoshikimate + phosphoenolpyruvate = 5-O-(1-carboxyvinyl)-3-phosphoshikimate + phosphate. Its pathway is metabolic intermediate biosynthesis; chorismate biosynthesis; chorismate from D-erythrose 4-phosphate and phosphoenolpyruvate: step 6/7. In terms of biological role, catalyzes the transfer of the enolpyruvyl moiety of phosphoenolpyruvate (PEP) to the 5-hydroxyl of shikimate-3-phosphate (S3P) to produce enolpyruvyl shikimate-3-phosphate and inorganic phosphate. In Chlorobium phaeobacteroides (strain BS1), this protein is 3-phosphoshikimate 1-carboxyvinyltransferase.